A 212-amino-acid polypeptide reads, in one-letter code: Pyridoxine/pyridoxamine 5'-phosphate oxidase (212 aa).

Substrate-binding positions include 8 to 11 (RREY) and K66. FMN-binding positions include 61-66 (RIVLLK), 76-77 (FT), R82, K83, and Q105. Substrate contacts are provided by Y123, R127, and S131. Residues 140-141 (QS) and W185 each bind FMN. 191 to 193 (RLH) contacts substrate. R195 contacts FMN.

This sequence belongs to the pyridoxamine 5'-phosphate oxidase family. Homodimer. FMN is required as a cofactor.

It carries out the reaction pyridoxamine 5'-phosphate + O2 + H2O = pyridoxal 5'-phosphate + H2O2 + NH4(+). The enzyme catalyses pyridoxine 5'-phosphate + O2 = pyridoxal 5'-phosphate + H2O2. Its pathway is cofactor metabolism; pyridoxal 5'-phosphate salvage; pyridoxal 5'-phosphate from pyridoxamine 5'-phosphate: step 1/1. The protein operates within cofactor metabolism; pyridoxal 5'-phosphate salvage; pyridoxal 5'-phosphate from pyridoxine 5'-phosphate: step 1/1. Functionally, catalyzes the oxidation of either pyridoxine 5'-phosphate (PNP) or pyridoxamine 5'-phosphate (PMP) into pyridoxal 5'-phosphate (PLP). This chain is Pyridoxine/pyridoxamine 5'-phosphate oxidase, found in Shewanella sp. (strain MR-7).